Reading from the N-terminus, the 100-residue chain is Urease subunit gamma (100 aa).

This sequence belongs to the urease gamma subunit family. In terms of assembly, heterotrimer of UreA (gamma), UreB (beta) and UreC (alpha) subunits. Three heterotrimers associate to form the active enzyme.

Its subcellular location is the cytoplasm. It carries out the reaction urea + 2 H2O + H(+) = hydrogencarbonate + 2 NH4(+). The protein operates within nitrogen metabolism; urea degradation; CO(2) and NH(3) from urea (urease route): step 1/1. The chain is Urease subunit gamma from Mycolicibacterium smegmatis (strain ATCC 700084 / mc(2)155) (Mycobacterium smegmatis).